Here is a 520-residue protein sequence, read N- to C-terminus: Cytochrome P450 4F8 (520 aa).

The helical transmembrane segment at 15–37 (AASPWLLLLVVGASWLLARILAW) threads the bilayer. Residue cysteine 468 coordinates heme.

The protein belongs to the cytochrome P450 family. Requires heme as cofactor. As to expression, expressed in the epithelium of seminal vesicles, in renal cortex, in adult and fetal liver, in epidermis, in corneal epithelium, in sweat glands, hair follicles, epithelial linings of the ampulla of vas deferens and of the stomach and small intestine, as well as in the transitional epithelium of the bladder and ureter (at protein level). In the epidermis, expressed from the basal cell to the granular cell layers. In the corneal epithelium, expressed in all cell layers. Also detected in prostate. Up-regulated in the epidermis of psoriatic lesions.

It is found in the endoplasmic reticulum membrane. Its subcellular location is the microsome membrane. The enzyme catalyses an organic molecule + reduced [NADPH--hemoprotein reductase] + O2 = an alcohol + oxidized [NADPH--hemoprotein reductase] + H2O + H(+). It catalyses the reaction (5Z,8Z,11Z,14Z)-eicosatetraenoate + reduced [NADPH--hemoprotein reductase] + O2 = (18R)-hydroxy-(5Z,8Z,11Z,14Z)-eicosatetraenoate + oxidized [NADPH--hemoprotein reductase] + H2O + H(+). The catalysed reaction is (4Z,7Z,10Z,13Z,16Z)-docosapentaenoate + reduced [NADPH--hemoprotein reductase] + O2 = 20-hydroxy-(4Z,7Z,10Z,13Z,16Z)-docosapentaenoate + oxidized [NADPH--hemoprotein reductase] + H2O + H(+). It carries out the reaction prostaglandin H1 + reduced [NADPH--hemoprotein reductase] + O2 = 19-hydroxyprostaglandin H1 + oxidized [NADPH--hemoprotein reductase] + H2O + H(+). The enzyme catalyses prostaglandin H2 + reduced [NADPH--hemoprotein reductase] + O2 = 19-hydroxyprostaglandin H2 + oxidized [NADPH--hemoprotein reductase] + H2O + H(+). It catalyses the reaction prostaglandin I2 + reduced [NADPH--hemoprotein reductase] + O2 = 19-hydroxy-prostaglandin I2 + oxidized [NADPH--hemoprotein reductase] + H2O + H(+). The catalysed reaction is (4Z,7Z,10Z,13Z,16Z,19Z)-docosahexaenoate + reduced [NADPH--hemoprotein reductase] + O2 = 10,11-epoxy-(4Z,7Z,13Z,16Z,19Z)-docosapentaenoate + oxidized [NADPH--hemoprotein reductase] + H2O + H(+). It carries out the reaction (4Z,7Z,10Z,13Z,16Z,19Z)-docosahexaenoate + reduced [NADPH--hemoprotein reductase] + O2 = 13,14-epoxy-(4Z,7Z,10Z,16Z,19Z)-docosapentaenoate + oxidized [NADPH--hemoprotein reductase] + H2O + H(+). The enzyme catalyses (4Z,7Z,10Z,13Z,16Z,19Z)-docosahexaenoate + reduced [NADPH--hemoprotein reductase] + O2 = 16,17-epoxy-(4Z,7Z,10Z,13Z,19Z)-docosapentaenoate + oxidized [NADPH--hemoprotein reductase] + H2O + H(+). It catalyses the reaction (4Z,7Z,10Z,13Z,16Z,19Z)-docosahexaenoate + reduced [NADPH--hemoprotein reductase] + O2 = 19,20-epoxy-(4Z,7Z,10Z,13Z,16Z)-docosapentaenoate + oxidized [NADPH--hemoprotein reductase] + H2O + H(+). The catalysed reaction is (7Z,10Z,13Z,16Z,19Z)-docosapentaenoate + reduced [NADPH--hemoprotein reductase] + O2 = 10,11-epoxy-(7Z,13Z,16Z,19Z)-docosatetraenoate + oxidized [NADPH--hemoprotein reductase] + H2O + H(+). It carries out the reaction (7Z,10Z,13Z,16Z,19Z)-docosapentaenoate + reduced [NADPH--hemoprotein reductase] + O2 = 13,14-epoxy-(7Z,10Z,16Z,19Z)-docosatetraenoate + oxidized [NADPH--hemoprotein reductase] + H2O + H(+). The enzyme catalyses (7Z,10Z,13Z,16Z,19Z)-docosapentaenoate + reduced [NADPH--hemoprotein reductase] + O2 = 16,17-epoxy-(7Z,10Z,13Z,19Z)-docosatetraenoate + oxidized [NADPH--hemoprotein reductase] + H2O + H(+). It catalyses the reaction (7Z,10Z,13Z,16Z,19Z)-docosapentaenoate + reduced [NADPH--hemoprotein reductase] + O2 = 19,20-epoxy-(7Z,10Z,13Z,16Z)-docosatetraenoate + oxidized [NADPH--hemoprotein reductase] + H2O + H(+). The protein operates within lipid metabolism; fatty acid metabolism. Functionally, a cytochrome P450 monooxygenase involved in the metabolism of endogenous polyunsaturated fatty acids (PUFAs) and their oxygenated derivatives (oxylipins). Mechanistically, uses molecular oxygen inserting one oxygen atom into a substrate, and reducing the second into a water molecule, with two electrons provided by NADPH via cytochrome P450 reductase (CPR; NADPH-ferrihemoprotein reductase). Catalyzes the hydroxylation of carbon hydrogen bonds, with preference for omega-1 and omega-2 positions. Hydroxylates (5Z,8Z,11Z,14Z)-eicosatetraenoic acid (arachidonate) predominantly at omega-2 position to form (18R)-hydroxyeicosatetraenoic acid (18R-HETE). Exhibits omega-1 hydroxylase activity toward prostaglandin (PG) H1, PGH2 and PGI2. Catalyzes the epoxidation of double bonds of PUFAs, including docosahexaenoic and docosapentaenoic acids. Shows little activity against PGD2, PGE1, PGE2, PGF2alpha, and leukotriene B4. The protein is Cytochrome P450 4F8 of Homo sapiens (Human).